A 253-amino-acid polypeptide reads, in one-letter code: Phosphoribosylaminoimidazole-succinocarboxamide synthase (253 aa).

Belongs to the SAICAR synthetase family.

It catalyses the reaction 5-amino-1-(5-phospho-D-ribosyl)imidazole-4-carboxylate + L-aspartate + ATP = (2S)-2-[5-amino-1-(5-phospho-beta-D-ribosyl)imidazole-4-carboxamido]succinate + ADP + phosphate + 2 H(+). It functions in the pathway purine metabolism; IMP biosynthesis via de novo pathway; 5-amino-1-(5-phospho-D-ribosyl)imidazole-4-carboxamide from 5-amino-1-(5-phospho-D-ribosyl)imidazole-4-carboxylate: step 1/2. The sequence is that of Phosphoribosylaminoimidazole-succinocarboxamide synthase from Parvibaculum lavamentivorans (strain DS-1 / DSM 13023 / NCIMB 13966).